The sequence spans 209 residues: Kynurenine formamidase (209 aa).

Trp-18 is a substrate binding site. 3 residues coordinate Zn(2+): His-48, His-52, and Asp-54. His-58 acts as the Proton donor/acceptor in catalysis. Zn(2+)-binding residues include His-160 and Glu-172.

Belongs to the Cyclase 1 superfamily. KynB family. As to quaternary structure, homodimer. Requires Zn(2+) as cofactor.

The catalysed reaction is N-formyl-L-kynurenine + H2O = L-kynurenine + formate + H(+). It functions in the pathway amino-acid degradation; L-tryptophan degradation via kynurenine pathway; L-kynurenine from L-tryptophan: step 2/2. Catalyzes the hydrolysis of N-formyl-L-kynurenine to L-kynurenine, the second step in the kynurenine pathway of tryptophan degradation. The chain is Kynurenine formamidase from Paraburkholderia phymatum (strain DSM 17167 / CIP 108236 / LMG 21445 / STM815) (Burkholderia phymatum).